We begin with the raw amino-acid sequence, 471 residues long: Serine hydroxymethyltransferase, cytosolic (471 aa).

An N6-(pyridoxal phosphate)lysine modification is found at Lys-249.

It belongs to the SHMT family. Requires pyridoxal 5'-phosphate as cofactor.

Its subcellular location is the cytoplasm. The protein localises to the cytosol. It carries out the reaction (6R)-5,10-methylene-5,6,7,8-tetrahydrofolate + glycine + H2O = (6S)-5,6,7,8-tetrahydrofolate + L-serine. It functions in the pathway one-carbon metabolism; tetrahydrofolate interconversion. In terms of biological role, catalyzes the interconversion of serine and glycine. Essential for viability and required for virulence in a murine model of established pulmonary infection. This is Serine hydroxymethyltransferase, cytosolic from Aspergillus fumigatus (strain ATCC MYA-4609 / CBS 101355 / FGSC A1100 / Af293) (Neosartorya fumigata).